A 332-amino-acid polypeptide reads, in one-letter code: Aquaporin-7-2 (332 aa).

Residues 1–40 (MSGQHQITEQPSGNPLSRTSTLIQEKPLTPTSSHAGTQKQ) are compositionally biased toward polar residues. Positions 1–46 (MSGQHQITEQPSGNPLSRTSTLIQEKPLTPTSSHAGTQKQPEAPRQ) are disordered. The Cytoplasmic portion of the chain corresponds to 1–66 (MSGQHQITEQ…RHAIRKPMAE (66 aa)). A helical transmembrane segment spans residues 67–87 (FFGVALLIIFGAGSACQVVLS). At 88–100 (TNPDVASSARGSF) the chain is on the extracellular side. Residues 101–121 (LSINFGWAIGIAMGVWVSGGI) form a helical membrane-spanning segment. Topologically, residues 122-144 (SGGHINPAITIAMATYRGFPWCK) are cytoplasmic. Positions 127–129 (NPA) match the NPA 1 motif. A helical transmembrane segment spans residues 145 to 165 (VPSYILAQVLGGVVGAALVYA). Residues 166 to 199 (NYIHAIDVFEGGHHIRTEATASLFATYALPYMTQ) are Extracellular-facing. A helical transmembrane segment spans residues 200-220 (ASCFFSEFLATAVLSMMVFAL). The Cytoplasmic portion of the chain corresponds to 221 to 230 (TDKRNHSPTN). A helical membrane pass occupies residues 231–251 (GLLPFALFILFVGLGASLGME). Residues 252–283 (TAYALNPARDFGPRLFLAMAGYGKALFNYRSQ) are Extracellular-facing. An NPA 2 motif is present at residues 257–259 (NPA). The chain crosses the membrane as a helical span at residues 284–304 (YWLWAPIIAPVLGAQAGGLLY). Over 305–332 (DTFLNDGDNSPIKWRCASSQEQQLAEVV) the chain is Cytoplasmic.

It belongs to the MIP/aquaporin (TC 1.A.8) family.

It is found in the membrane. The enzyme catalyses H2O(in) = H2O(out). In terms of biological role, water channel required to facilitate the transport of water across membranes. Does not mediate the transport carbon dioxide across the membrane. This is Aquaporin-7-2 from Laccaria bicolor (Bicoloured deceiver).